The following is an 88-amino-acid chain: Small ribosomal subunit protein bS20 (88 aa).

Residues 1–28 form a disordered region; the sequence is MANIKSQIKRNKTNEKARLRNKAVKSSL.

It belongs to the bacterial ribosomal protein bS20 family.

Functionally, binds directly to 16S ribosomal RNA. The chain is Small ribosomal subunit protein bS20 from Streptomyces avermitilis (strain ATCC 31267 / DSM 46492 / JCM 5070 / NBRC 14893 / NCIMB 12804 / NRRL 8165 / MA-4680).